A 401-amino-acid polypeptide reads, in one-letter code: E3 ubiquitin-protein ligase NHLRC1 (401 aa).

The RING-type zinc finger occupies 28–74 (CKVCFERFGHWQQRRPRNLPCGHVVCLACVAALAHPRTLGLECPFCR). NHL repeat units follow at residues 115–159 (TLTC…FDSG), 163–206 (AHQF…FDFF), 207–247 (GQIK…LEAD), 250–303 (EGVL…FNST), 304–352 (MQLI…LGKP), and 353–396 (EEFP…FKVM).

As to quaternary structure, interacts with AGL. Interacts (via the NHL repeats) with EPM2A/laforin. Forms a complex with EPM2A/laforin and HSP70. Interacts with PRDM8.

Its subcellular location is the endoplasmic reticulum. It localises to the nucleus. The enzyme catalyses S-ubiquitinyl-[E2 ubiquitin-conjugating enzyme]-L-cysteine + [acceptor protein]-L-lysine = [E2 ubiquitin-conjugating enzyme]-L-cysteine + N(6)-ubiquitinyl-[acceptor protein]-L-lysine.. It functions in the pathway protein modification; protein ubiquitination. In terms of biological role, E3 ubiquitin-protein ligase. Together with the phosphatase EPM2A/laforin, appears to be involved in the clearance of toxic polyglucosan and protein aggregates via multiple pathways. In complex with EPM2A/laforin and HSP70, suppresses the cellular toxicity of misfolded proteins by promoting their degradation through the ubiquitin-proteasome system (UPS). Ubiquitinates the glycogen-targeting protein phosphatase subunits PPP1R3C/PTG and PPP1R3D in a laforin-dependent manner and targets them for proteasome-dependent degradation, thus decreasing glycogen accumulation. Polyubiquitinates EPM2A/laforin and ubiquitinates AGL and targets them for proteasome-dependent degradation. Also promotes proteasome-independent protein degradation through the macroautophagy pathway. The polypeptide is E3 ubiquitin-protein ligase NHLRC1 (Nhlrc1) (Mus musculus (Mouse)).